Consider the following 151-residue polypeptide: Methylglyoxal synthase (151 aa).

Positions 6–151 constitute an MGS-like domain; that stretch reads RVMPAHKHIA…DYDAYLAERV (146 aa). Residues His19, Lys23, 45-48, and 65-66 contribute to the substrate site; these read TGTT and SG. Asp71 (proton donor/acceptor) is an active-site residue. Position 98 (His98) interacts with substrate.

Belongs to the methylglyoxal synthase family.

It carries out the reaction dihydroxyacetone phosphate = methylglyoxal + phosphate. In terms of biological role, catalyzes the formation of methylglyoxal from dihydroxyacetone phosphate. The protein is Methylglyoxal synthase of Aliivibrio fischeri (strain MJ11) (Vibrio fischeri).